The following is a 139-amino-acid chain: S-adenosylmethionine decarboxylase proenzyme (139 aa).

Ser-63 functions as the Schiff-base intermediate with substrate; via pyruvic acid in the catalytic mechanism. A Pyruvic acid (Ser); by autocatalysis modification is found at Ser-63. Residue His-68 is the Proton acceptor; for processing activity of the active site. Cys-83 serves as the catalytic Proton donor; for catalytic activity.

The protein belongs to the prokaryotic AdoMetDC family. Type 1 subfamily. As to quaternary structure, heterotetramer of two alpha and two beta chains arranged as a dimer of alpha/beta heterodimers. Requires pyruvate as cofactor. In terms of processing, is synthesized initially as an inactive proenzyme. Formation of the active enzyme involves a self-maturation process in which the active site pyruvoyl group is generated from an internal serine residue via an autocatalytic post-translational modification. Two non-identical subunits are generated from the proenzyme in this reaction, and the pyruvate is formed at the N-terminus of the alpha chain, which is derived from the carboxyl end of the proenzyme. The post-translation cleavage follows an unusual pathway, termed non-hydrolytic serinolysis, in which the side chain hydroxyl group of the serine supplies its oxygen atom to form the C-terminus of the beta chain, while the remainder of the serine residue undergoes an oxidative deamination to produce ammonia and the pyruvoyl group blocking the N-terminus of the alpha chain.

It catalyses the reaction S-adenosyl-L-methionine + H(+) = S-adenosyl 3-(methylsulfanyl)propylamine + CO2. It participates in amine and polyamine biosynthesis; S-adenosylmethioninamine biosynthesis; S-adenosylmethioninamine from S-adenosyl-L-methionine: step 1/1. In terms of biological role, catalyzes the decarboxylation of S-adenosylmethionine to S-adenosylmethioninamine (dcAdoMet), the propylamine donor required for the synthesis of the polyamines spermine and spermidine from the diamine putrescine. The polypeptide is S-adenosylmethionine decarboxylase proenzyme (Pyrococcus horikoshii (strain ATCC 700860 / DSM 12428 / JCM 9974 / NBRC 100139 / OT-3)).